The primary structure comprises 181 residues: Protein Syd (181 aa).

Belongs to the Syd family.

Its subcellular location is the cell inner membrane. Its function is as follows. Interacts with the SecY protein in vivo. May bind preferentially to an uncomplexed state of SecY, thus functioning either as a chelating agent for excess SecY in the cell or as a regulatory factor that negatively controls the translocase function. This chain is Protein Syd, found in Shigella flexneri serotype 5b (strain 8401).